Consider the following 95-residue polypeptide: Integration host factor subunit beta (95 aa).

The disordered stretch occupies residues 56-95; that stretch reads RAPRTGRNPKTGETVELDGKHVPHFKPGKELRDRVNESIA. A compositionally biased stretch (basic and acidic residues) spans 72-95; that stretch reads LDGKHVPHFKPGKELRDRVNESIA.

This sequence belongs to the bacterial histone-like protein family. Heterodimer of an alpha and a beta chain.

Functionally, this protein is one of the two subunits of integration host factor, a specific DNA-binding protein that functions in genetic recombination as well as in transcriptional and translational control. The sequence is that of Integration host factor subunit beta from Pseudoalteromonas translucida (strain TAC 125).